Here is a 122-residue protein sequence, read N- to C-terminus: Basic phospholipase A2 Cdr-12 (122 aa).

7 disulfides stabilise this stretch: Cys-26–Cys-115, Cys-28–Cys-44, Cys-43–Cys-95, Cys-49–Cys-122, Cys-50–Cys-88, Cys-57–Cys-81, and Cys-75–Cys-86. 3 residues coordinate Ca(2+): Tyr-27, Gly-29, and Gly-31. His-47 is an active-site residue. Asp-48 contributes to the Ca(2+) binding site. Asp-89 is a catalytic residue.

It depends on Ca(2+) as a cofactor. As to expression, expressed by the venom gland.

It is found in the secreted. The enzyme catalyses a 1,2-diacyl-sn-glycero-3-phosphocholine + H2O = a 1-acyl-sn-glycero-3-phosphocholine + a fatty acid + H(+). In terms of biological role, snake venom phospholipase A2 (PLA2) that induces myonecrosis and edema upon intramuscular injections in mice. In vitro, causes a potent blockade of neuromuscular transmission in young chicken biventer cervicis preparation and produces cytotoxicity in murine C2C12 skeletal muscle myotubes and lack cytolytic activity upon myoblasts in vitro. PLA2 catalyzes the calcium-dependent hydrolysis of the 2-acyl groups in 3-sn-phosphoglycerides. This chain is Basic phospholipase A2 Cdr-12, found in Crotalus durissus ruruima (South American rattlesnake).